The sequence spans 228 residues: MAAQQRDCGGAAQLAGPAAEADPLGRFTCPVCLEVYEKPVQVPCGHVFCSACLQECLKPKKPVCGVCRSALAPGVRAVELERQIESTETSCHGCRKKFFLSKIRSHVATCSKYQNYIMEGVKATIKDASLQPRNVPNRYTFPCPYCPEKNFDQEGLVEHCKLFHSTDTKSVVCPICASMPWGDPNYRSANFREHIQRRHRFSYDTFVDYDVDEEDMMNQVLQRSIIDQ.

The RING-type zinc-finger motif lies at 29–68 (CPVCLEVYEKPVQVPCGHVFCSACLQECLKPKKPVCGVCR). 2 residues coordinate Zn(2+): Cys91 and Cys94. The C2HC RNF-type zinc finger occupies 91–110 (CHGCRKKFFLSKIRSHVATC). Lys102 is modified (N6-acetyllysine). The Zn(2+) site is built by His106 and Cys110. Lys112 carries the post-translational modification N6-acetyllysine.

As to quaternary structure, interacts with XAF1, the interaction increases XAF1 stability and proapoptotic effects, and may regulate IFN signaling. Post-translationally, autoubiquitinated. Polyubiquitinated in the presence of E2 enzymes UBE2D1, UBE2D2 and UBE2D3, but only monoubiquitinated in the presence of UBE2E1.

It is found in the cytoplasm. It localises to the nucleus. The catalysed reaction is S-ubiquitinyl-[E2 ubiquitin-conjugating enzyme]-L-cysteine + [acceptor protein]-L-lysine = [E2 ubiquitin-conjugating enzyme]-L-cysteine + N(6)-ubiquitinyl-[acceptor protein]-L-lysine.. It participates in protein modification; protein ubiquitination. E3 ubiquitin-protein ligase that promotes the ubiquitination of various substrates. In turn, participates in the regulation of many biological processes including cell cycle, apoptosis, osteoclastogenesis as well as innate or adaptive immunity. Acts as negative regulator of NF-kappa-B-dependent transcription by promoting the ubiquitination and stabilization of the NF-kappa-B inhibitor TNFAIP3. May promote the ubiquitination of TRAF6 as well. Also acts as a negative regulator of T-cell activation. Inhibits cellular dsRNA responses and interferon production by targeting MAVS component for proteasomal degradation. Ubiquitinates the CDK inhibitor CDKN1A leading to its degradationand probably also CDKN1B and CDKN1C. This activity stimulates cell cycle G1-to-S phase transition and suppresses cellular senescence. May play a role in spermatogenesis. This is E3 ubiquitin-protein ligase RNF114 (RNF114) from Pan troglodytes (Chimpanzee).